Reading from the N-terminus, the 246-residue chain is Hsp70 nucleotide exchange factor fes-1 (246 aa).

Polar residues predominate over residues 23 to 40; the sequence is QSYHSNGAPTPNNNSGPA. Positions 23 to 63 are disordered; it reads QSYHSNGAPTPNNNSGPATGTGAVATSPAPQVTGSGPRPVD. 4 ARM repeats span residues 48-92, 113-152, 155-196, and 214-244; these read TSPA…DPSP, LDNANLLEELSLWSPLISLLDHEDEDMRYHAAWCLGTAVQ, QKTQ…SAVR, and HEVLVNNGTKVDAADMDKVDEVIDVLRNKAK.

Belongs to the FES1 family.

The protein resides in the cytoplasm. Functions as a nucleotide exchange factor (NEF) for Hsp70 chaperones which accelerates the release of ADP. Required for fully efficient Hsp70-mediated folding of proteins. The polypeptide is Hsp70 nucleotide exchange factor fes-1 (fes-1) (Neurospora crassa (strain ATCC 24698 / 74-OR23-1A / CBS 708.71 / DSM 1257 / FGSC 987)).